A 255-amino-acid chain; its full sequence is GTP cyclohydrolase III 1 (255 aa).

Belongs to the archaeal-type GTP cyclohydrolase family.

The enzyme catalyses GTP + 3 H2O = 2-amino-5-formylamino-6-(5-phospho-D-ribosylamino)pyrimidin-4(3H)-one + 2 phosphate + 2 H(+). Its function is as follows. Catalyzes the formation of 2-amino-5-formylamino-6-ribofuranosylamino-4(3H)-pyrimidinone ribonucleotide monophosphate and inorganic phosphate from GTP. Also has an independent pyrophosphate phosphohydrolase activity. In Halobacterium salinarum (strain ATCC 700922 / JCM 11081 / NRC-1) (Halobacterium halobium), this protein is GTP cyclohydrolase III 1 (gch31).